A 529-amino-acid chain; its full sequence is Cytochrome P450 monooxygenase ausG (529 aa).

The helical transmembrane segment at 31–51 threads the bilayer; that stretch reads FLVTCGLPWLLLLFSVTIILF. Position 470 (Cys470) interacts with heme.

It belongs to the cytochrome P450 family. The cofactor is heme.

It localises to the membrane. Its pathway is secondary metabolite biosynthesis; terpenoid biosynthesis. In terms of biological role, cytochrome P450 monooxygenase; part of the gene cluster B that mediates the biosynthesis of austinol and dehydroaustinol, two fungal meroterpenoids. The first step of the pathway is the synthesis of 3,5-dimethylorsellinic acid by the polyketide synthase ausA. 3,5-dimethylorsellinic acid is then prenylated by the polyprenyl transferase ausN. Further epoxidation by the FAD-dependent monooxygenase ausM and cyclization by the probable terpene cyclase ausL lead to the formation of protoaustinoid A. Protoaustinoid A is then oxidized to spiro-lactone preaustinoid A3 by the combined action of the FAD-binding monooxygenases ausB and ausC, and the dioxygenase ausE. Acid-catalyzed keto-rearrangement and ring contraction of the tetraketide portion of preaustinoid A3 by ausJ lead to the formation of preaustinoid A4. The aldo-keto reductase ausK, with the help of ausH, is involved in the next step by transforming preaustinoid A4 into isoaustinone which is in turn hydroxylated by the P450 monooxygenase ausI to form austinolide. Finally, the cytochrome P450 monooxygenase ausG modifies austinolide to austinol. Austinol can be further modified to dehydroaustinol which forms a diffusible complex with diorcinol that initiates conidiation. Due to genetic rearrangements of the clusters and the subsequent loss of some enzymes, the end products of the Emericella nidulans austinoid biosynthesis clusters are austinol and dehydroaustinol, even if additional enzymes, such as the O-acetyltransferase ausQ and the cytochrome P450 monooxygenase ausR are still functional. This Emericella nidulans (strain FGSC A4 / ATCC 38163 / CBS 112.46 / NRRL 194 / M139) (Aspergillus nidulans) protein is Cytochrome P450 monooxygenase ausG.